Here is a 352-residue protein sequence, read N- to C-terminus: Fe(3+) ions import ATP-binding protein FbpC 1 (352 aa).

Positions 11–241 (VELKHITKRF…PASRFMASFM (231 aa)) constitute an ABC transporter domain. 43-50 (GPSGCGKT) is an ATP binding site.

This sequence belongs to the ABC transporter superfamily. Fe(3+) ion importer (TC 3.A.1.10) family. The complex is composed of two ATP-binding proteins (FbpC), two transmembrane proteins (FbpB) and a solute-binding protein (FbpA).

It localises to the cell inner membrane. The catalysed reaction is Fe(3+)(out) + ATP + H2O = Fe(3+)(in) + ADP + phosphate + H(+). Its function is as follows. Part of the ABC transporter complex FbpABC involved in Fe(3+) ions import. Responsible for energy coupling to the transport system. The polypeptide is Fe(3+) ions import ATP-binding protein FbpC 1 (Pectobacterium atrosepticum (strain SCRI 1043 / ATCC BAA-672) (Erwinia carotovora subsp. atroseptica)).